We begin with the raw amino-acid sequence, 267 residues long: Putative carbamate hydrolase RutD (267 aa).

The AB hydrolase-1 domain occupies 14 to 115 (PTLVLSAGLG…EKLVVVNGWP (102 aa)).

It belongs to the AB hydrolase superfamily. Hydrolase RutD family.

It catalyses the reaction carbamate + 2 H(+) = NH4(+) + CO2. Functionally, involved in pyrimidine catabolism. May facilitate the hydrolysis of carbamate, a reaction that can also occur spontaneously. In Serratia proteamaculans (strain 568), this protein is Putative carbamate hydrolase RutD.